Here is a 98-residue protein sequence, read N- to C-terminus: Large ribosomal subunit protein uL23 (98 aa).

It belongs to the universal ribosomal protein uL23 family. In terms of assembly, part of the 50S ribosomal subunit. Contacts protein L29, and trigger factor when it is bound to the ribosome.

Its function is as follows. One of the early assembly proteins it binds 23S rRNA. One of the proteins that surrounds the polypeptide exit tunnel on the outside of the ribosome. Forms the main docking site for trigger factor binding to the ribosome. This is Large ribosomal subunit protein uL23 from Nitrosococcus oceani (strain ATCC 19707 / BCRC 17464 / JCM 30415 / NCIMB 11848 / C-107).